Reading from the N-terminus, the 471-residue chain is Chitobiosyldiphosphodolichol beta-mannosyltransferase (471 aa).

The Lumenal portion of the chain corresponds to M1–S31. A helical transmembrane segment spans residues W32–P52. The Cytoplasmic segment spans residues Y53–K126. The helical intramembrane region spans S127–W147. Residues E148–S471 are Cytoplasmic-facing.

This sequence belongs to the glycosyltransferase group 1 family.

The protein localises to the endoplasmic reticulum membrane. It catalyses the reaction an N,N'-diacetylchitobiosyl-diphospho-di-trans,poly-cis-dolichol + GDP-alpha-D-mannose = a beta-D-Man-(1-&gt;4)-beta-D-GlcNAc-(1-&gt;4)-alpha-D-GlcNAc-diphospho-di-trans,poly-cis-dolichol + GDP + H(+). It functions in the pathway protein modification; protein glycosylation. Participates in the formation of the lipid-linked precursor oligosaccharide for N-glycosylation. Involved in assembling the dolichol-pyrophosphate-GlcNAc(2)-Man(5) intermediate on the cytoplasmic surface of the ER. This Eremothecium gossypii (strain ATCC 10895 / CBS 109.51 / FGSC 9923 / NRRL Y-1056) (Yeast) protein is Chitobiosyldiphosphodolichol beta-mannosyltransferase (ALG1).